The following is a 95-amino-acid chain: MSRSVKKGPFVDKKLYKRVVEMNKAANQRNKKVIKSYSRCSTIIPEMVGFTISVHNGKSWIPVYITEEFVGHKLGEFSPTRVFRGHSGSDKKVGR.

It belongs to the universal ribosomal protein uS19 family.

Its function is as follows. Protein S19 forms a complex with S13 that binds strongly to the 16S ribosomal RNA. The chain is Small ribosomal subunit protein uS19 (rpsS) from Treponema pallidum (strain Nichols).